We begin with the raw amino-acid sequence, 199 residues long: Pro-thyrotropin-releasing hormone (199 aa).

A signal peptide spans 1–22; sequence MRAVCVFVLACVAVSGAPGVRG. The segment at 48–90 is disordered; it reads EEQNSENDQPEWMEKRQHPGKRQHPGKREEDLEPEVEMERWRR. Pyrrolidone carboxylic acid is present on Gln64. A Proline amide modification is found at Pro66. The residue at position 70 (Gln70) is a Pyrrolidone carboxylic acid. A Proline amide modification is found at Pro72. Residue Gln91 is modified to Pyrrolidone carboxylic acid. Proline amide is present on Pro93. Pyrrolidone carboxylic acid is present on Gln117. At Pro119 the chain carries Proline amide. Disordered stretches follow at residues 129–160 and 175–199; these read KRQHPGRRELQEADGDSAELEKRQHPGKRRCE and TSGAPEKRQHPGRRAELEDELPGLE. Gln131 carries the pyrrolidone carboxylic acid modification. The residue at position 133 (Pro133) is a Proline amide. Basic and acidic residues-rich tracts occupy residues 147 to 160 and 179 to 190; these read ELEKRQHPGKRRCE and PEKRQHPGRRAE. Position 152 is a pyrrolidone carboxylic acid (Gln152). Position 154 is a proline amide (Pro154). The residue at position 183 (Gln183) is a Pyrrolidone carboxylic acid. Position 185 is a proline amide (Pro185).

The protein belongs to the TRH family.

The protein localises to the secreted. Functions as a regulator of the biosynthesis of TSH in the anterior pituitary gland and as a neurotransmitter/ neuromodulator in the central and peripheral nervous systems. In Danio rerio (Zebrafish), this protein is Pro-thyrotropin-releasing hormone (trh).